Reading from the N-terminus, the 465-residue chain is Uronate isomerase (465 aa).

This sequence belongs to the metallo-dependent hydrolases superfamily. Uronate isomerase family.

It carries out the reaction D-glucuronate = D-fructuronate. It catalyses the reaction aldehydo-D-galacturonate = keto-D-tagaturonate. It functions in the pathway carbohydrate metabolism; pentose and glucuronate interconversion. The chain is Uronate isomerase from Streptococcus equi subsp. equi (strain 4047).